We begin with the raw amino-acid sequence, 451 residues long: UPF0210 protein CLH_1879 (451 aa).

The protein belongs to the UPF0210 family. In terms of assembly, homodimer.

In Clostridium botulinum (strain Alaska E43 / Type E3), this protein is UPF0210 protein CLH_1879.